The sequence spans 579 residues: uncharacterized protein (579 aa).

Positions 449 to 577 (QKGVFILVDI…GKNRLMIHDS (129 aa)) constitute a GGDEF domain.

This is an uncharacterized protein from Bacillus subtilis (strain 168).